The primary structure comprises 92 residues: MYGLINIGFGNVVAGDRVIAIVNPESSPLKRMKDEAKLEGKLIDATYGRKTRSIIITDSNHIILSAIQPETIAQRFMENFYEIERVLRETKK.

This sequence belongs to the RemA family.

This is Putative regulatory protein Tpet_0986 from Thermotoga petrophila (strain ATCC BAA-488 / DSM 13995 / JCM 10881 / RKU-1).